The following is a 297-amino-acid chain: Phosphatidylinositol N-acetylglucosaminyltransferase subunit C (297 aa).

4 consecutive transmembrane segments (helical) span residues 67 to 87 (VFVV…WLFG), 88 to 108 (TGLA…GGDG), 153 to 173 (SVFM…AAIV), and 239 to 259 (AFGG…LLLF).

It belongs to the PIGC family. In terms of assembly, component of the glycosylphosphatidylinositol-N-acetylglucosaminyltransferase (GPI-GnT) complex composed at least by PIGA, PIGC, PIGH, PIGP, PIGQ, PIGY and DPM2. Interacts with PIGQ. Interacts with the heterodimer PIGA:PIGH.

Its subcellular location is the endoplasmic reticulum membrane. It functions in the pathway glycolipid biosynthesis; glycosylphosphatidylinositol-anchor biosynthesis. In terms of biological role, part of the glycosylphosphatidylinositol-N-acetylglucosaminyltransferase (GPI-GnT) complex that catalyzes the transfer of N-acetylglucosamine from UDP-N-acetylglucosamine to phosphatidylinositol and participates in the first step of GPI biosynthesis. The chain is Phosphatidylinositol N-acetylglucosaminyltransferase subunit C from Rattus norvegicus (Rat).